A 232-amino-acid chain; its full sequence is Large ribosomal subunit protein uL1 (232 aa).

It belongs to the universal ribosomal protein uL1 family. As to quaternary structure, part of the 50S ribosomal subunit.

Its function is as follows. Binds directly to 23S rRNA. The L1 stalk is quite mobile in the ribosome, and is involved in E site tRNA release. Protein L1 is also a translational repressor protein, it controls the translation of the L11 operon by binding to its mRNA. The protein is Large ribosomal subunit protein uL1 of Bartonella quintana (strain Toulouse) (Rochalimaea quintana).